Consider the following 323-residue polypeptide: AA9 family lytic polysaccharide monooxygenase B (323 aa).

Positions 1–18 (MKSFTLTTLAALAGNAAA) are cleaved as a signal peptide. His-19 and His-97 together coordinate Cu(2+). An intrachain disulfide couples Cys-56 to Cys-191. O2-binding residues include His-177 and Gln-186. Tyr-188 contributes to the Cu(2+) binding site. In terms of domain architecture, CBM1 spans 286–323 (CTVQKYQQCGGQGYTGCTNCASGSTCSAVSPPYYSQCV).

Belongs to the polysaccharide monooxygenase AA9 family. Cu(2+) serves as cofactor.

It is found in the secreted. It catalyses the reaction [(1-&gt;4)-beta-D-glucosyl]n+m + reduced acceptor + O2 = 4-dehydro-beta-D-glucosyl-[(1-&gt;4)-beta-D-glucosyl]n-1 + [(1-&gt;4)-beta-D-glucosyl]m + acceptor + H2O.. Is able to utilize various natural phenolic compounds as reducing agents. Most of these reducing agents are present in plants, either free or as lignin building blocks, such as sinapic acid, or as flavonoids such as catechin and dopamine. Phenolic compounds with 1,2-benzenediol and 1,2,3-benzenetriol moieties yield the highest release of oxidized and non-oxidized glucooligosaccharides from cellulose compared to monophenols or sulfur-containing compounds. Its function is as follows. Lytic polysaccharide monooxygenase (LPMO) that depolymerizes crystalline and amorphous polysaccharides via the oxidation of scissile alpha- or beta-(1-4)-glycosidic bonds, yielding C1 oxidation products. Catalysis by LPMOs requires the reduction of the active-site copper from Cu(II) to Cu(I) by a reducing agent and H(2)O(2) or O(2) as a cosubstrate. Is active on regenerated amorphous cellulose (RAC). This chain is AA9 family lytic polysaccharide monooxygenase B, found in Thermothelomyces thermophilus (strain ATCC 42464 / BCRC 31852 / DSM 1799) (Sporotrichum thermophile).